A 374-amino-acid chain; its full sequence is RNA polymerase sigma factor SigA (374 aa).

The sigma-70 factor domain-2 stretch occupies residues 141 to 211 (LAEANLRLVV…TRAIADQART (71 aa)). The short motif at 165–168 (DLIQ) is the Interaction with polymerase core subunit RpoC element. The segment at 220 to 296 (ETINKLIRVQ…DQDATSPSDH (77 aa)) is sigma-70 factor domain-3. The interval 309 to 362 (VLDTLTDREENVLRLRFGLDDGRTRTLEEVGRVFGVTRERIRQIEAKALRKLRH) is sigma-70 factor domain-4. Residues 335–354 (LEEVGRVFGVTRERIRQIEA) constitute a DNA-binding region (H-T-H motif).

The protein belongs to the sigma-70 factor family. RpoD/SigA subfamily. Interacts transiently with the RNA polymerase catalytic core.

The protein localises to the cytoplasm. Functionally, sigma factors are initiation factors that promote the attachment of RNA polymerase to specific initiation sites and are then released. This sigma factor is the primary sigma factor during exponential growth. The protein is RNA polymerase sigma factor SigA of Listeria monocytogenes serovar 1/2a (strain ATCC BAA-679 / EGD-e).